The following is a 318-amino-acid chain: Aspartate carbamoyltransferase catalytic subunit (318 aa).

Carbamoyl phosphate contacts are provided by Arg-58 and Thr-59. Lys-86 is an L-aspartate binding site. The carbamoyl phosphate site is built by Arg-108, His-141, and Gln-144. Positions 174 and 226 each coordinate L-aspartate. 2 residues coordinate carbamoyl phosphate: Gly-270 and Pro-271.

The protein belongs to the aspartate/ornithine carbamoyltransferase superfamily. ATCase family. Heterododecamer (2C3:3R2) of six catalytic PyrB chains organized as two trimers (C3), and six regulatory PyrI chains organized as three dimers (R2).

It carries out the reaction carbamoyl phosphate + L-aspartate = N-carbamoyl-L-aspartate + phosphate + H(+). It functions in the pathway pyrimidine metabolism; UMP biosynthesis via de novo pathway; (S)-dihydroorotate from bicarbonate: step 2/3. In terms of biological role, catalyzes the condensation of carbamoyl phosphate and aspartate to form carbamoyl aspartate and inorganic phosphate, the committed step in the de novo pyrimidine nucleotide biosynthesis pathway. The chain is Aspartate carbamoyltransferase catalytic subunit from Lactobacillus delbrueckii subsp. bulgaricus (strain ATCC BAA-365 / Lb-18).